Consider the following 317-residue polypeptide: tRNA dimethylallyltransferase (317 aa).

14 to 21 (GPTAVGKT) contacts ATP. Residue 16-21 (TAVGKT) participates in substrate binding. Positions 39–42 (DSMQ) are interaction with substrate tRNA.

The protein belongs to the IPP transferase family. Monomer. It depends on Mg(2+) as a cofactor.

The enzyme catalyses adenosine(37) in tRNA + dimethylallyl diphosphate = N(6)-dimethylallyladenosine(37) in tRNA + diphosphate. Functionally, catalyzes the transfer of a dimethylallyl group onto the adenine at position 37 in tRNAs that read codons beginning with uridine, leading to the formation of N6-(dimethylallyl)adenosine (i(6)A). This chain is tRNA dimethylallyltransferase, found in Bacillus thuringiensis subsp. konkukian (strain 97-27).